The following is a 442-amino-acid chain: Glutamyl-tRNA(Gln) amidotransferase subunit D (442 aa).

The interval 63-84 is disordered; that stretch reads TQTDIGSSAGAGADTEADKTES. The Asparaginase/glutaminase domain maps to 102–429; it reads PTVSLISTGG…PDPTNAMRKS (328 aa). Catalysis depends on residues threonine 112, threonine 188, aspartate 189, and lysine 265.

This sequence belongs to the asparaginase 1 family. GatD subfamily. In terms of assembly, heterodimer of GatD and GatE.

It catalyses the reaction L-glutamyl-tRNA(Gln) + L-glutamine + ATP + H2O = L-glutaminyl-tRNA(Gln) + L-glutamate + ADP + phosphate + H(+). Allows the formation of correctly charged Gln-tRNA(Gln) through the transamidation of misacylated Glu-tRNA(Gln) in organisms which lack glutaminyl-tRNA synthetase. The reaction takes place in the presence of glutamine and ATP through an activated gamma-phospho-Glu-tRNA(Gln). The GatDE system is specific for glutamate and does not act on aspartate. In Haloquadratum walsbyi (strain DSM 16790 / HBSQ001), this protein is Glutamyl-tRNA(Gln) amidotransferase subunit D.